Consider the following 177-residue polypeptide: UPF0102 protein BPP4042 (177 aa).

Positions Ala-13–Arg-43 are disordered.

This sequence belongs to the UPF0102 family.

In Bordetella parapertussis (strain 12822 / ATCC BAA-587 / NCTC 13253), this protein is UPF0102 protein BPP4042.